The sequence spans 149 residues: Urease accessory protein UreE (149 aa).

The protein belongs to the UreE family.

The protein resides in the cytoplasm. Involved in urease metallocenter assembly. Binds nickel. Probably functions as a nickel donor during metallocenter assembly. This Synechococcus sp. (strain JA-3-3Ab) (Cyanobacteria bacterium Yellowstone A-Prime) protein is Urease accessory protein UreE.